A 316-amino-acid chain; its full sequence is Phosphate acyltransferase (316 aa).

This sequence belongs to the PlsX family. Homodimer. Probably interacts with PlsY.

The protein localises to the cytoplasm. It catalyses the reaction a fatty acyl-[ACP] + phosphate = an acyl phosphate + holo-[ACP]. Its pathway is lipid metabolism; phospholipid metabolism. Its function is as follows. Catalyzes the reversible formation of acyl-phosphate (acyl-PO(4)) from acyl-[acyl-carrier-protein] (acyl-ACP). This enzyme utilizes acyl-ACP as fatty acyl donor, but not acyl-CoA. The protein is Phosphate acyltransferase of Chlamydia caviae (strain ATCC VR-813 / DSM 19441 / 03DC25 / GPIC) (Chlamydophila caviae).